A 418-amino-acid polypeptide reads, in one-letter code: Somatostatin receptor type 3 (418 aa).

Residues Met1–Ala21 are disordered. Residues Met1 to Ser43 are Extracellular-facing. Residues Ser7–Ser20 show a composition bias toward polar residues. Asn17 and Asn30 each carry an N-linked (GlcNAc...) asparagine glycan. The chain crosses the membrane as a helical span at residues Gly44–Val69. Residues Leu70–Thr79 are Cytoplasmic-facing. A helical transmembrane segment spans residues Asn80–Ala101. The Extracellular portion of the chain corresponds to Ala102–Cys116. Residues Cys116 and Cys191 are joined by a disulfide bond. The helical transmembrane segment at Arg117–Ser138 threads the bilayer. Over Val139–Arg161 the chain is Cytoplasmic. The chain crosses the membrane as a helical span at residues Thr162–Phe181. Topologically, residues Ser182–Gly205 are extracellular. A helical transmembrane segment spans residues Phe206–Val231. Over Lys232–Arg257 the chain is Cytoplasmic. The helical transmembrane segment at Met258–Val279 threads the bilayer. Topologically, residues Asn280 to Gly293 are extracellular. The helical transmembrane segment at Leu294 to Leu316 threads the bilayer. The Cytoplasmic portion of the chain corresponds to Ser317–Leu418. Residues Ser332 and Ser337 each carry the phosphoserine modification. The tract at residues Val335–Leu418 is disordered. Thr348 carries the post-translational modification Phosphothreonine. Residues Thr348–Glu360 are compositionally biased toward acidic residues. A compositionally biased stretch (basic and acidic residues) spans Ser361 to Asn371. Composition is skewed to polar residues over residues Arg373 to Gln385 and Lys395 to Leu418.

This sequence belongs to the G-protein coupled receptor 1 family. In terms of assembly, homodimer and heterodimer with SSTR2. Heterodimerization with SSTR2 inactivates SSTR3 receptor function. Post-translationally, phosphorylated. Phosphorylation increases upon somatostatin binding. As to expression, brain, pituitary and pancreas.

It is found in the cell membrane. Functionally, receptor for somatostatin-14 and -28. This receptor is coupled via pertussis toxin sensitive G proteins to inhibition of adenylyl cyclase. This is Somatostatin receptor type 3 (SSTR3) from Homo sapiens (Human).